Here is an 898-residue protein sequence, read N- to C-terminus: MSLQKLENYSNKSVVQEEVLILTELLEDITKNMLAPETFEKIIQLKELSTQEDYQGLNRLVTSLSNDEMVYISRYFSILPLLINISEDVDLAYEINHQNNIDQDYLGKLSTTIKLVAEKENAVEILEHLNVVPVLTAHPTQVQRKSMLDLTNHIHSLLRKYRDVKLGLINKDKWYNDLRRYIEIIMQTDMIREKKLKVTNEITNAMEYYNSSFLKAVPHLTTEYKRLAQAHGLNLKQAKPITMGMWIGGDRDGNPFVTAKTLKQSALTQCEVIMNYYDKKIYQLYREFSLSTSIVNVSKQVREMARQSKDNSIYREKELYRRALFDIQSKIQATKTYLIEDEEVGTRYETANDFYKDLIAIRDSLLENKGESLISGDFVELLQAVEIFGFYLASIDMRQDSSVYEACVAELLKSAGIHSRYSELSEEEKCDLLLKELEEDPRILSATHAEKSELLAKELAIFKTARVLKDKLGDDVIRQTIISHATSLSDMLELAILLKEVGLVDTERARVQIVPLFETIEDLDHSEETMRKYLSLSLAKKWIDSRNNYQEIMLGYSDSNKDGGYLSSCWTLYKAQQQLTAIGDEFGVKVTFFHGRGGTVGRGGGPTYEAITSQPLKSIKDRIRLTEQGEVIGNKYGNKDAAYYNLEMLVSAAINRMITQKKSDTNTPNRYETIMDQVVDRSYDIYRDLVFGNEHFYDYFFESSPIKAISSFNIGSRPAARKTITEIGGLRAIPWVFSWSQSRVMFPGWYGVGSSFKEFINKNPENIAILRDMYQNWPFFQSLLSNVDMVLSKSNMNIAFEYAKLCEDEQVKAIYETILNEWQVTKNVILAIEGHDELLADNPYLKASLDYRMPYFNILNYIQLELIKRQRRGELSSDQERLIHITINGIATGLRNSG.

Active-site residues include His138 and Lys561.

Belongs to the PEPCase type 1 family. Requires Mg(2+) as cofactor.

The catalysed reaction is oxaloacetate + phosphate = phosphoenolpyruvate + hydrogencarbonate. In terms of biological role, forms oxaloacetate, a four-carbon dicarboxylic acid source for the tricarboxylic acid cycle. The sequence is that of Phosphoenolpyruvate carboxylase from Streptococcus pneumoniae serotype 4 (strain ATCC BAA-334 / TIGR4).